Consider the following 254-residue polypeptide: 5-oxoprolinase subunit A (254 aa).

Belongs to the LamB/PxpA family. In terms of assembly, forms a complex composed of PxpA, PxpB and PxpC.

The catalysed reaction is 5-oxo-L-proline + ATP + 2 H2O = L-glutamate + ADP + phosphate + H(+). Catalyzes the cleavage of 5-oxoproline to form L-glutamate coupled to the hydrolysis of ATP to ADP and inorganic phosphate. The protein is 5-oxoprolinase subunit A of Burkholderia orbicola (strain MC0-3).